Consider the following 152-residue polypeptide: MSQPCPCGSADEYSLCCGRIVSGERVAPDPSHLMRSRYCAFVMKDADYLIKSWHPTCNAAAFRDDIIAGFANTRWLGLTIFEHTWSEAENTGYVSFIARFSEQGKNGAIIERSRFIKENGQWYYIDGTRPQLGRNDPCPCGSGKKFKKCCGQ.

This sequence belongs to the UPF0225 family.

The polypeptide is UPF0225 protein YchJ (ychJ) (Salmonella typhimurium (strain LT2 / SGSC1412 / ATCC 700720)).